The chain runs to 61 residues: N-acetyl-D-glucosamine kinase (61 aa).

Position 30 is a phosphotyrosine (Tyr30). Residue Ser45 coordinates ATP.

The protein belongs to the eukaryotic-type N-acetylglucosamine kinase family. Homodimer.

The enzyme catalyses N-acetyl-D-glucosamine + ATP = N-acetyl-D-glucosamine 6-phosphate + ADP + H(+). It catalyses the reaction aldehydo-N-acetyl-D-mannosamine + ATP = aldehydo-N-acetyl-D-mannosamine 6-phosphate + ADP + H(+). It carries out the reaction N-acetyl-D-muramoyl-L-alanyl-D-isoglutamine + ATP = 6-O-phospho-N-acetyl-D-muramoyl-L-alanyl-D-isoglutamine + ADP + H(+). It participates in amino-sugar metabolism; N-acetylneuraminate degradation. Its function is as follows. Converts endogenous N-acetylglucosamine (GlcNAc), a major component of complex carbohydrates, from lysosomal degradation or nutritional sources into GlcNAc 6-phosphate. Also has N-acetylmannosamine (ManNAc) kinase activity. Involved in the N-glycolylneuraminic acid (Neu5Gc) degradation pathway. Also involved in innate immunity by promoting detection of bacterial peptidoglycan by NOD2: acts by catalyzing phosphorylation of muramyl dipeptide (MDP), a fragment of bacterial peptidoglycan, to generate 6-O-phospho-muramyl dipeptide, which acts as a direct ligand for NOD2. The protein is N-acetyl-D-glucosamine kinase of Mesocricetus auratus (Golden hamster).